Here is a 144-residue protein sequence, read N- to C-terminus: Small ribosomal subunit protein eS17 (144 aa).

The protein belongs to the eukaryotic ribosomal protein eS17 family.

This is Small ribosomal subunit protein eS17 (RPS17) from Solanum lycopersicum (Tomato).